We begin with the raw amino-acid sequence, 182 residues long: ATP-dependent protease subunit HslV (182 aa).

T12 is a catalytic residue. Na(+) is bound by residues A167, C170, and T173.

Belongs to the peptidase T1B family. HslV subfamily. A double ring-shaped homohexamer of HslV is capped on each side by a ring-shaped HslU homohexamer. The assembly of the HslU/HslV complex is dependent on binding of ATP.

Its subcellular location is the cytoplasm. It catalyses the reaction ATP-dependent cleavage of peptide bonds with broad specificity.. With respect to regulation, allosterically activated by HslU binding. In terms of biological role, protease subunit of a proteasome-like degradation complex believed to be a general protein degrading machinery. In Chlorobium luteolum (strain DSM 273 / BCRC 81028 / 2530) (Pelodictyon luteolum), this protein is ATP-dependent protease subunit HslV.